The primary structure comprises 239 residues: 1-(5-phosphoribosyl)-5-[(5-phosphoribosylamino)methylideneamino] imidazole-4-carboxamide isomerase (239 aa).

Asp-8 functions as the Proton acceptor in the catalytic mechanism. The Proton donor role is filled by Asp-129.

The protein belongs to the HisA/HisF family.

The protein resides in the cytoplasm. It catalyses the reaction 1-(5-phospho-beta-D-ribosyl)-5-[(5-phospho-beta-D-ribosylamino)methylideneamino]imidazole-4-carboxamide = 5-[(5-phospho-1-deoxy-D-ribulos-1-ylimino)methylamino]-1-(5-phospho-beta-D-ribosyl)imidazole-4-carboxamide. Its pathway is amino-acid biosynthesis; L-histidine biosynthesis; L-histidine from 5-phospho-alpha-D-ribose 1-diphosphate: step 4/9. This chain is 1-(5-phosphoribosyl)-5-[(5-phosphoribosylamino)methylideneamino] imidazole-4-carboxamide isomerase, found in Bacillus cytotoxicus (strain DSM 22905 / CIP 110041 / 391-98 / NVH 391-98).